The chain runs to 1482 residues: Chromosome partition protein MukB (1482 aa).

Glycine 34–serine 41 lines the ATP pocket. 6 coiled-coil regions span residues leucine 337–alanine 468, glutamine 509–tryptophan 604, arginine 780–serine 805, glutamate 835–aspartate 1044, threonine 1070–alanine 1115, and glutamate 1210–valine 1265. The flexible hinge stretch occupies residues proline 666–arginine 783.

It belongs to the SMC family. MukB subfamily. As to quaternary structure, homodimerization via its hinge domain. Binds to DNA via its C-terminal region. Interacts, and probably forms a ternary complex, with MukE and MukF via its C-terminal region. The complex formation is stimulated by calcium or magnesium. Interacts with tubulin-related protein FtsZ.

The protein resides in the cytoplasm. It localises to the nucleoid. Its function is as follows. Plays a central role in chromosome condensation, segregation and cell cycle progression. Functions as a homodimer, which is essential for chromosome partition. Involved in negative DNA supercoiling in vivo, and by this means organize and compact chromosomes. May achieve or facilitate chromosome segregation by condensation DNA from both sides of a centrally located replisome during cell division. This is Chromosome partition protein MukB from Serratia proteamaculans (strain 568).